The primary structure comprises 87 residues: MIIKVRVIPNSKRNEVVSRVGSILRVKITAPAIEGRANEELCDFLSDFFDVKRSMIFLRKGERGREKTIEVLGRLEEELNEVLDTIP.

This sequence belongs to the UPF0235 family.

This Endomicrobium trichonymphae protein is UPF0235 protein TGRD_618.